Reading from the N-terminus, the 612-residue chain is BTB/POZ domain-containing protein 9 (612 aa).

A BTB domain is found at 36–104 (GDVTFVVEKK…IYTGRATLTD (69 aa)). The BACK domain maps to 142–240 (VCMTFDVASL…SLTELLNVVR (99 aa)). A disordered region spans residues 559–612 (QQSNQKEDSSEEPGTGDPSTPNQQLDPHAPRAPSASSLPPSPGPNSRSPNQQNQ). The span at 589 to 612 (RAPSASSLPPSPGPNSRSPNQQNQ) shows a compositional bias: low complexity.

In terms of tissue distribution, expressed in the brain (at protein level).

The protein is BTB/POZ domain-containing protein 9 (Btbd9) of Mus musculus (Mouse).